We begin with the raw amino-acid sequence, 400 residues long: MGRAKKVVLAYSGGVDTSVCIPYLKQEWGVEEVITLAADLGQGDELEPIREKALKSGASESLVADVKESFIKDYAFPAIQANALYENRYPLGTALARPLIAKILVEAAAKYGADAIAHGCTGKGNDQVRFDVSCTALNPNLKILAPAREWGMSREATIAYGEKFGIPSPVKKSSPYSIDKNLLGRSIEAGALEDPKFEPPEEIYEMTKAIADTPNEPEYIEIGFTQGLPTTLNGIPKDPVALIQELNQVVGSHGVGRIDMIENRLVGIKSREIYESPAMLVLIPAHRDLESLTLTADVSHYKRGIEETYSQIVYNGLWYSPLKAALDAFIQKTQERVSGTVRVKLFKGNATIVGRWSDSSLYTPDLATYGAEDQFDHKAAEGFIYVWGLPTRIWAQQDRG.

ATP is bound by residues A10–S18 and A38. Y89 provides a ligand contact to L-citrulline. ATP is bound at residue G119. Positions 121, 125, and 126 each coordinate L-aspartate. N125 contributes to the L-citrulline binding site. Residues R129, S177, S186, E262, and Y274 each contribute to the L-citrulline site.

This sequence belongs to the argininosuccinate synthase family. Type 1 subfamily. As to quaternary structure, homotetramer.

It is found in the cytoplasm. The enzyme catalyses L-citrulline + L-aspartate + ATP = 2-(N(omega)-L-arginino)succinate + AMP + diphosphate + H(+). It participates in amino-acid biosynthesis; L-arginine biosynthesis; L-arginine from L-ornithine and carbamoyl phosphate: step 2/3. This Nostoc sp. (strain PCC 7120 / SAG 25.82 / UTEX 2576) protein is Argininosuccinate synthase.